We begin with the raw amino-acid sequence, 605 residues long: Alpha-1,3-galactosidase A (605 aa).

An N-terminal signal peptide occupies residues 1-20; the sequence is MKKYLHILPACFLFYAAAHA. PbH1 repeat units follow at residues 256-278, 312-334, 421-443, 444-466, 477-507, and 517-547; these read SKNI…VSQY, KGKV…NVHG, TPEV…LVTT, PRKV…LIEA, VKDV…HPSN, and HQNI…LFRN.

It belongs to the glycosyl hydrolase 110 family. A subfamily.

It carries out the reaction Hydrolysis of terminal, non-reducing branched (1-&gt;3)-alpha-D-galactosidic residues, producing free D-galactose.. The enzyme catalyses Hydrolysis of terminal, non-reducing alpha-D-galactose residues in alpha-D-galactosides, including galactose oligosaccharides, galactomannans and galactolipids.. Alpha-galactosidase that specifically removes branched alpha-1,3-linked galactose residues present in blood group B antigens. Has no activity toward linear alpha-1,3-linked galactose residues. The chain is Alpha-1,3-galactosidase A (glaA) from Bacteroides fragilis (strain YCH46).